The chain runs to 1054 residues: Reverse gyrase (1054 aa).

An RG N-terminal-type zinc finger spans residues 1 to 43 (MIPVVYSNLCPVCGGDLESKEIEKHVCFRKKRSLCLFPEDFLL). The Zn(2+) site is built by C10, C13, C27, and C35. A disulfide bond links C35 and C650. 4 residues coordinate ATP: Q61, K84, T85, and S86. The Helicase ATP-binding domain maps to 65–245 (AKRILRKESF…FRQLLNFDIG (181 aa)). Residues 182 to 185 (DDVD) carry the DEAD box motif. The tract at residues 352-427 (PSFRVTIEDI…EGEVIFPDLR (76 aa)) is latch region. The interval 502–1054 (DLIKPALFIV…DLYAEIKSID (553 aa)) is topoisomerase I. The 157-residue stretch at 506-662 (PALFIVESPT…VKRAEFHEVT (157 aa)) folds into the Toprim domain. E512 contributes to the Mg(2+) binding site. An RG C-terminal-type zinc finger spans residues 581-609 (IKRCRDCGYQFTEDRESCPKCGSENVDNS). C584, C587, C598, and C601 together coordinate Zn(2+). D631 is a binding site for Mg(2+). In terms of domain architecture, Topo IA-type catalytic spans 677–1054 (DENLVKAQVV…DLYAEIKSID (378 aa)). The active-site O-(5'-phospho-DNA)-tyrosine intermediate is the Y809.

In the N-terminal section; belongs to the DEAD box helicase family. DDVD subfamily. This sequence in the C-terminal section; belongs to the type IA topoisomerase family. In terms of assembly, monomer. It depends on Zn(2+) as a cofactor. Requires Mg(2+) as cofactor.

It localises to the cytoplasm. It carries out the reaction ATP + H2O = ADP + phosphate + H(+). Modifies the topological state of DNA by introducing positive supercoils in an ATP-dependent process, increasing the linking number in steps of +1. Very efficient supercoiling occurs on relaxed DNA with a single-stranded bubble; the minimal bubble is 20 nucleotides (nt) and up to 10 positive supercoils can be introduced into a 3.1 kb plasmid with a 50 nt bubble. Positively supercoils DNA with all (d)NTPS, although it requires about 10-fold more of non-(d)ATP. In the absence of ATP (or at low levels of enzyme), or in the presence of ADP, relaxes negative supercoils. Only relaxes positive supercoils when the substrate contains a bubble. Also promotes strand annealing of complementary ssDNA circles. Binds to single-stranded DNA, transiently cleaves and then rejoins the ends, introducing a positive supercoil in the process. The scissile phosphodiester is attacked by the catalytic tyrosine of the enzyme, resulting in the formation of a DNA-(5'-phosphotyrosyl)-enzyme intermediate. Probably involved in rewinding DNA strands in regions of the chromosome that have opened up to allow replication, transcription, DNA repair and/or for DNA protection. Its function is as follows. In vitro protects DNA against degradation at 90 degrees Celsius, reducing dsDNA breakage about 8-fold; ATP hydrolysis is not necessary, while ADP decreases the protection somewhat. Coats all forms of dsDNA; the DNA is protected against cleavage and transcription. Recognizes nicked DNA and forms a coat at the nicking site, which may help hold DNA in a structure amenable to repair. This Archaeoglobus fulgidus (strain ATCC 49558 / DSM 4304 / JCM 9628 / NBRC 100126 / VC-16) protein is Reverse gyrase.